The sequence spans 346 residues: Aspartate-semialdehyde dehydrogenase (346 aa).

NADP(+)-binding positions include 12 to 15 (SGAV) and 40 to 41 (RS). Arg-101 lines the phosphate pocket. The Acyl-thioester intermediate role is filled by Cys-131. Gln-158 lines the substrate pocket. Residue 161-162 (SG) participates in NADP(+) binding. Lys-225 contacts phosphate. Position 246 (Arg-246) interacts with substrate. Catalysis depends on His-253, which acts as the Proton acceptor. Gln-326 contacts NADP(+).

It belongs to the aspartate-semialdehyde dehydrogenase family. In terms of assembly, homodimer.

The enzyme catalyses L-aspartate 4-semialdehyde + phosphate + NADP(+) = 4-phospho-L-aspartate + NADPH + H(+). It functions in the pathway amino-acid biosynthesis; L-lysine biosynthesis via DAP pathway; (S)-tetrahydrodipicolinate from L-aspartate: step 2/4. The protein operates within amino-acid biosynthesis; L-methionine biosynthesis via de novo pathway; L-homoserine from L-aspartate: step 2/3. Its pathway is amino-acid biosynthesis; L-threonine biosynthesis; L-threonine from L-aspartate: step 2/5. Catalyzes the NADPH-dependent formation of L-aspartate-semialdehyde (L-ASA) by the reductive dephosphorylation of L-aspartyl-4-phosphate. The chain is Aspartate-semialdehyde dehydrogenase from Helicobacter pylori (strain J99 / ATCC 700824) (Campylobacter pylori J99).